Consider the following 511-residue polypeptide: GMP synthase [glutamine-hydrolyzing] (511 aa).

One can recognise a Glutamine amidotransferase type-1 domain in the interval I5–D195. Catalysis depends on C82, which acts as the Nucleophile. Catalysis depends on residues H169 and E171. One can recognise a GMPS ATP-PPase domain in the interval W196–R386. S223–S229 provides a ligand contact to ATP.

As to quaternary structure, homodimer.

The catalysed reaction is XMP + L-glutamine + ATP + H2O = GMP + L-glutamate + AMP + diphosphate + 2 H(+). It participates in purine metabolism; GMP biosynthesis; GMP from XMP (L-Gln route): step 1/1. Functionally, catalyzes the synthesis of GMP from XMP. In Caldicellulosiruptor saccharolyticus (strain ATCC 43494 / DSM 8903 / Tp8T 6331), this protein is GMP synthase [glutamine-hydrolyzing].